The following is a 275-amino-acid chain: Large ribosomal subunit protein uL2 (275 aa).

Residues A224–G275 are disordered.

The protein belongs to the universal ribosomal protein uL2 family. As to quaternary structure, part of the 50S ribosomal subunit. Forms a bridge to the 30S subunit in the 70S ribosome.

One of the primary rRNA binding proteins. Required for association of the 30S and 50S subunits to form the 70S ribosome, for tRNA binding and peptide bond formation. It has been suggested to have peptidyltransferase activity; this is somewhat controversial. Makes several contacts with the 16S rRNA in the 70S ribosome. This chain is Large ribosomal subunit protein uL2, found in Xanthomonas oryzae pv. oryzae (strain MAFF 311018).